The chain runs to 384 residues: MNYLVNYCKISFYFLMSISLSLFLISLKFLLMDLVYFIEWEILSLQSMSIVMTFLFDWMSLMFMSFVLLISSLVIFYSNQYMEEDYNINRFILLVLMFVMSMMMLIISPNLISILLGWDGLGLVSYCLVIYFQNVKSYNAGMLTALSNRIGDVALLLAIAWMLNYGSWNYIFYLDMMKNNIEMMIIGGLVMLAAMTKSAQIPFSSWLPAAMAAPTPVSALVHSSTLVTAGVYLLIRFNDVLMNWWMAQFLLLVSGLTMFMAGLGANFEFDLKKIIALSTLSQLGLMMSILSMGFYKLAFFHLLTHALFKALLFMCAGSIIHNMKNSQDIRMMGSLSMSMPLTCSCFNVANLALCGMPFLAGFYSKDLILEMVMLSYVNVFSFFL.

Helical transmembrane passes span 12 to 32 (FYFL…FLLM), 50 to 70 (IVMT…VLLI), 92 to 112 (ILLV…PNLI), 113 to 133 (SILL…IYFQ), 153 to 173 (VALL…YIFY), 183 to 203 (MMII…QIPF), 215 to 235 (TPVS…YLLI), 244 to 264 (WWMA…AGLG), 274 to 293 (IIAL…LSMG), 298 to 320 (AFFH…GSII), 343 to 363 (CSCF…AGFY), and 364 to 384 (SKDL…SFFL).

This sequence belongs to the complex I subunit 5 family.

The protein resides in the mitochondrion inner membrane. The catalysed reaction is a ubiquinone + NADH + 5 H(+)(in) = a ubiquinol + NAD(+) + 4 H(+)(out). Functionally, core subunit of the mitochondrial membrane respiratory chain NADH dehydrogenase (Complex I) that is believed to belong to the minimal assembly required for catalysis. Complex I functions in the transfer of electrons from NADH to the respiratory chain. The immediate electron acceptor for the enzyme is believed to be ubiquinone. The polypeptide is NADH-ubiquinone oxidoreductase chain 5 (ND5) (Anopheles arabiensis (Mosquito)).